Consider the following 759-residue polypeptide: Polyribonucleotide nucleotidyltransferase (759 aa).

Asp-522 and Asp-528 together coordinate Mg(2+). Positions 588–647 (PRITTIKVPVDKIGEVIGPKGKMINSITEETGASISIEDDGTVFVGASNGEAAQAAIDKI) constitute a KH domain. The S1 motif domain maps to 659–728 (GERFLGTVVK…NRGKISLVLV (70 aa)). Residues 734–759 (AEASDNGSATPSDKAPATADATTAGN) are disordered. Positions 741-759 (SATPSDKAPATADATTAGN) are enriched in low complexity.

Belongs to the polyribonucleotide nucleotidyltransferase family. Mg(2+) is required as a cofactor.

It localises to the cytoplasm. It catalyses the reaction RNA(n+1) + phosphate = RNA(n) + a ribonucleoside 5'-diphosphate. Functionally, involved in mRNA degradation. Catalyzes the phosphorolysis of single-stranded polyribonucleotides processively in the 3'- to 5'-direction. This Mycobacterium sp. (strain JLS) protein is Polyribonucleotide nucleotidyltransferase.